Here is a 200-residue protein sequence, read N- to C-terminus: Probable nicotinate-nucleotide adenylyltransferase (200 aa).

The protein belongs to the NadD family.

It catalyses the reaction nicotinate beta-D-ribonucleotide + ATP + H(+) = deamido-NAD(+) + diphosphate. The protein operates within cofactor biosynthesis; NAD(+) biosynthesis; deamido-NAD(+) from nicotinate D-ribonucleotide: step 1/1. Catalyzes the reversible adenylation of nicotinate mononucleotide (NaMN) to nicotinic acid adenine dinucleotide (NaAD). This chain is Probable nicotinate-nucleotide adenylyltransferase, found in Clavibacter michiganensis subsp. michiganensis (strain NCPPB 382).